The primary structure comprises 246 residues: Peroxisomal membrane protein 11A (246 aa).

The Cytoplasmic portion of the chain corresponds to 1 to 93; the sequence is MDAFIRVANQ…LCLTLANLNR (93 aa). A helical transmembrane segment spans residues 94–114; it reads VVYYICDTVLWAKSVGLTSGV. Over 115–217 the chain is Lumenal; that stretch reads NREKWQRWAA…LNQLGIYKSN (103 aa). Residues 218-238 traverse the membrane as a helical segment; it reads LGVVGLGGLISSLAGLLTVVY. Positions 218 to 238 are required for homodimerization, interaction with PEX11G, and peroxisomal localization; it reads LGVVGLGGLISSLAGLLTVVY. The Cytoplasmic segment spans residues 239-246; it reads PQLKLKAR.

Belongs to the peroxin-11 family. As to quaternary structure, homodimer. Heterodimer with PEX11G. Probably interacts with COPB2 and COPA. Interacts with PEX19. Interacts with FIS1. Strongly expressed in liver and at lower levels in heart, brain, kidney and testis.

Its subcellular location is the peroxisome membrane. Functionally, may be involved in peroxisomal proliferation and may regulate peroxisomes division. May mediate binding of coatomer proteins to the peroxisomal membrane. Promotes membrane protrusion and elongation on the peroxisomal surface. This chain is Peroxisomal membrane protein 11A (Pex11a), found in Mus musculus (Mouse).